Reading from the N-terminus, the 612-residue chain is Dihydroxy-acid dehydratase (612 aa).

Aspartate 81 serves as a coordination point for Mg(2+). Cysteine 122 contributes to the [2Fe-2S] cluster binding site. Aspartate 123 and lysine 124 together coordinate Mg(2+). N6-carboxylysine is present on lysine 124. Cysteine 195 is a [2Fe-2S] cluster binding site. Glutamate 491 contributes to the Mg(2+) binding site. Serine 517 serves as the catalytic Proton acceptor.

This sequence belongs to the IlvD/Edd family. Homodimer. Requires [2Fe-2S] cluster as cofactor. Mg(2+) serves as cofactor.

It carries out the reaction (2R)-2,3-dihydroxy-3-methylbutanoate = 3-methyl-2-oxobutanoate + H2O. It catalyses the reaction (2R,3R)-2,3-dihydroxy-3-methylpentanoate = (S)-3-methyl-2-oxopentanoate + H2O. It functions in the pathway amino-acid biosynthesis; L-isoleucine biosynthesis; L-isoleucine from 2-oxobutanoate: step 3/4. Its pathway is amino-acid biosynthesis; L-valine biosynthesis; L-valine from pyruvate: step 3/4. Functions in the biosynthesis of branched-chain amino acids. Catalyzes the dehydration of (2R,3R)-2,3-dihydroxy-3-methylpentanoate (2,3-dihydroxy-3-methylvalerate) into 2-oxo-3-methylpentanoate (2-oxo-3-methylvalerate) and of (2R)-2,3-dihydroxy-3-methylbutanoate (2,3-dihydroxyisovalerate) into 2-oxo-3-methylbutanoate (2-oxoisovalerate), the penultimate precursor to L-isoleucine and L-valine, respectively. The sequence is that of Dihydroxy-acid dehydratase from Bartonella henselae (strain ATCC 49882 / DSM 28221 / CCUG 30454 / Houston 1) (Rochalimaea henselae).